Here is a 98-residue protein sequence, read N- to C-terminus: Acylphosphatase (98 aa).

One can recognise an Acylphosphatase-like domain in the interval 12 to 98 (TYYVRVRGVV…EKRFERFQQQ (87 aa)). Catalysis depends on residues Arg27 and Asn45.

Belongs to the acylphosphatase family.

It carries out the reaction an acyl phosphate + H2O = a carboxylate + phosphate + H(+). The protein is Acylphosphatase (acyP) of Burkholderia cenocepacia (strain HI2424).